Consider the following 151-residue polypeptide: Large ribosomal subunit protein bL9 (151 aa).

This sequence belongs to the bacterial ribosomal protein bL9 family.

Functionally, binds to the 23S rRNA. This is Large ribosomal subunit protein bL9 from Dehalococcoides mccartyi (strain ATCC BAA-2100 / JCM 16839 / KCTC 5957 / BAV1).